The primary structure comprises 250 residues: Isoprenyl transferase (250 aa).

Residue Asp27 is part of the active site. Residue Asp27 participates in Mg(2+) binding. Substrate-binding positions include 28–31 (GNRR), Trp32, His48, and 76–78 (STE). Catalysis depends on Asn79, which acts as the Proton acceptor. Substrate is bound by residues Phe80, Arg82, Arg199, and 205-207 (RVS). A Mg(2+)-binding site is contributed by Glu218.

This sequence belongs to the UPP synthase family. As to quaternary structure, homodimer. It depends on Mg(2+) as a cofactor.

In terms of biological role, catalyzes the condensation of isopentenyl diphosphate (IPP) with allylic pyrophosphates generating different type of terpenoids. This chain is Isoprenyl transferase, found in Chlamydia caviae (strain ATCC VR-813 / DSM 19441 / 03DC25 / GPIC) (Chlamydophila caviae).